A 295-amino-acid polypeptide reads, in one-letter code: sn-glycerol-3-phosphate transport system permease protein UgpA (295 aa).

Residues 1-11 (MSSSRPVFRSR) lie on the Cytoplasmic side of the membrane. Residues 12–32 (WLPYLLVAPQLVITVIFFIWP) form a helical membrane-spanning segment. Residues 33 to 80 (AGEALWYSLQSVDPFGFSSQFVGLENFVALFHDSYYLDAFWTTIKFSA) are Periplasmic-facing. Residues 76-284 (IKFSALVTFS…FLVIILTVVQ (209 aa)) form the ABC transmembrane type-1 domain. A helical transmembrane segment spans residues 81-101 (LVTFSGLLVSLFFAALVDYVV). The Cytoplasmic portion of the chain corresponds to 102–109 (RGSRFYQT). The chain crosses the membrane as a helical span at residues 110–130 (LMLLPYAVAPAVAAVLWIFLF). At 131–157 (NPGRGLITHFLGEFGYDWNHAQNSGQA) the chain is on the periplasmic side. A helical transmembrane segment spans residues 158–178 (MFLVVFASVWKQISYNFLFFF). At 179–207 (AALQSIPRSLVEAAAIDGAGPIRRFFRLS) the chain is on the cytoplasmic side. A helical membrane pass occupies residues 208–228 (LPLIAPVSFFLLVVNLVYAFF). Residues 229 to 262 (DTFPVIDAATAGGPVQATTTLIYKIYREGFTGLD) are Periplasmic-facing. The chain crosses the membrane as a helical span at residues 263–283 (LSASAAQSVVLMFLVIILTVV). Topologically, residues 284-295 (QFRYVESKVRYQ) are cytoplasmic.

It belongs to the binding-protein-dependent transport system permease family. UgpAE subfamily. The complex is composed of two ATP-binding proteins (UgpC), two transmembrane proteins (UgpA and UgpE) and a solute-binding protein (UgpB).

It localises to the cell inner membrane. In terms of biological role, part of the ABC transporter complex UgpBAEC involved in sn-glycerol-3-phosphate (G3P) import. Probably responsible for the translocation of the substrate across the membrane. The polypeptide is sn-glycerol-3-phosphate transport system permease protein UgpA (ugpA) (Salmonella typhimurium (strain LT2 / SGSC1412 / ATCC 700720)).